The primary structure comprises 585 residues: Lipoprotein LpqB (585 aa).

The signal sequence occupies residues 1 to 18; it reads MKRLLTVLVVGLVALVSG. C19 carries N-palmitoyl cysteine lipidation. C19 is lipidated: S-diacylglycerol cysteine. The disordered stretch occupies residues 24–46; that stretch reads SSSSPQAIGTVERPAPPSLPKPT. Pro residues predominate over residues 37–46; sequence PAPPSLPKPT.

Belongs to the LpqB lipoprotein family. Interacts with MtrB, probably extracytoplasmically via its sensor domain.

It is found in the cell membrane. It localises to the secreted. The protein localises to the cell wall. Functionally, may modulate activity of the MtrAB system in controlling homeostasis of the cell wall and cell division. The protein is Lipoprotein LpqB of Mycolicibacterium smegmatis (strain ATCC 700084 / mc(2)155) (Mycobacterium smegmatis).